We begin with the raw amino-acid sequence, 149 residues long: 16.9 kDa class I heat shock protein 3 (149 aa).

The region spanning 35-149 (DTAAFANARV…PEVKAIEISG (115 aa)) is the sHSP domain.

It belongs to the small heat shock protein (HSP20) family. In terms of assembly, may form oligomeric structures.

It localises to the cytoplasm. The sequence is that of 16.9 kDa class I heat shock protein 3 (HSP16.9C) from Oryza sativa subsp. japonica (Rice).